We begin with the raw amino-acid sequence, 430 residues long: 3-phosphoshikimate 1-carboxyvinyltransferase (430 aa).

3-phosphoshikimate contacts are provided by lysine 20, serine 21, and arginine 25. Residue lysine 20 participates in phosphoenolpyruvate binding. Phosphoenolpyruvate-binding residues include glycine 92 and arginine 120. Positions 166, 168, 312, and 339 each coordinate 3-phosphoshikimate. Glutamine 168 contacts phosphoenolpyruvate. The active-site Proton acceptor is the aspartate 312. Phosphoenolpyruvate-binding residues include arginine 343 and arginine 387.

The protein belongs to the EPSP synthase family. In terms of assembly, monomer.

It localises to the cytoplasm. The enzyme catalyses 3-phosphoshikimate + phosphoenolpyruvate = 5-O-(1-carboxyvinyl)-3-phosphoshikimate + phosphate. It participates in metabolic intermediate biosynthesis; chorismate biosynthesis; chorismate from D-erythrose 4-phosphate and phosphoenolpyruvate: step 6/7. In terms of biological role, catalyzes the transfer of the enolpyruvyl moiety of phosphoenolpyruvate (PEP) to the 5-hydroxyl of shikimate-3-phosphate (S3P) to produce enolpyruvyl shikimate-3-phosphate and inorganic phosphate. This is 3-phosphoshikimate 1-carboxyvinyltransferase from Lactococcus lactis subsp. cremoris (strain SK11).